Here is a 513-residue protein sequence, read N- to C-terminus: ATP synthase subunit alpha (513 aa).

169–176 is a binding site for ATP; the sequence is GDRQIGKT.

It belongs to the ATPase alpha/beta chains family. F-type ATPases have 2 components, CF(1) - the catalytic core - and CF(0) - the membrane proton channel. CF(1) has five subunits: alpha(3), beta(3), gamma(1), delta(1), epsilon(1). CF(0) has three main subunits: a(1), b(2) and c(9-12). The alpha and beta chains form an alternating ring which encloses part of the gamma chain. CF(1) is attached to CF(0) by a central stalk formed by the gamma and epsilon chains, while a peripheral stalk is formed by the delta and b chains.

It localises to the cell inner membrane. The catalysed reaction is ATP + H2O + 4 H(+)(in) = ADP + phosphate + 5 H(+)(out). Functionally, produces ATP from ADP in the presence of a proton gradient across the membrane. The alpha chain is a regulatory subunit. The sequence is that of ATP synthase subunit alpha from Shewanella sediminis (strain HAW-EB3).